Consider the following 181-residue polypeptide: Ribosome maturation factor RimM (181 aa).

The region spanning 98-177 (EGEFFYCDLV…KITTHNAKTL (80 aa)) is the PRC barrel domain.

The protein belongs to the RimM family. As to quaternary structure, binds ribosomal protein uS19.

Its subcellular location is the cytoplasm. An accessory protein needed during the final step in the assembly of 30S ribosomal subunit, possibly for assembly of the head region. Essential for efficient processing of 16S rRNA. May be needed both before and after RbfA during the maturation of 16S rRNA. It has affinity for free ribosomal 30S subunits but not for 70S ribosomes. This Helicobacter pylori (strain HPAG1) protein is Ribosome maturation factor RimM.